Consider the following 129-residue polypeptide: Small ribosomal subunit protein uS11 (129 aa).

It belongs to the universal ribosomal protein uS11 family. Part of the 30S ribosomal subunit. Interacts with proteins S7 and S18. Binds to IF-3.

Functionally, located on the platform of the 30S subunit, it bridges several disparate RNA helices of the 16S rRNA. Forms part of the Shine-Dalgarno cleft in the 70S ribosome. The protein is Small ribosomal subunit protein uS11 of Cereibacter sphaeroides (strain ATCC 17025 / ATH 2.4.3) (Rhodobacter sphaeroides).